The sequence spans 1704 residues: Phospholipid-transporting ATPase ABCA3 (1704 aa).

Asn-14 carries an N-linked (GlcNAc...) asparagine glycan. A helical transmembrane segment spans residues 22–42; it reads VLVTVLELFLPLLFSGILIWL. Asn-53, Asn-124, and Asn-140 each carry an N-linked (GlcNAc...) asparagine glycan. 6 helical membrane passes run 261–283, 307–327, 344–364, 373–393, 405–425, and 447–467; these read YQLPLLLLLSFTYTALTIARAVV, AWFLLFFLFLLIAASFMTLLF, SLVLAFLLCFAISTISFSFMV, MAAAFGGFLYFFTYIPYFFVA, LCSCLLSNVAMAMGAQLIGKF, and FCFGQVLGMLLLDSVLYGLVT. In terms of domain architecture, ABC transporter 1 spans 530-763; sequence IKIKHLSKVF…YGAGYHMTLV (234 aa). 566 to 573 provides a ligand contact to ATP; the sequence is GHNGAGKT. N-linked (GlcNAc...) asparagine glycans are attached at residues Asn-620 and Asn-783. The next 7 membrane-spanning stretches (helical) occupy residues 925 to 945, 1100 to 1120, 1144 to 1164, 1183 to 1203, 1213 to 1233, 1245 to 1265, and 1306 to 1326; these read MVAAQVLVPLTCVTLALLAIN, IALNLLFAMAFLASTFSILAV, SALLWDLISFLIPSLLLLVVF, LLLLLYGWAIIPLMYLMNFFF, LTIFNILSGIATFLMVTIMRI, LDHVFLVLPNHCLGMAVSSFY, and FVASMAASGCAYLILLFLIET. One can recognise an ABC transporter 2 domain in the interval 1381 to 1614; that stretch reads LIIKELSKVY…FGSGYSLRAK (234 aa). 1416–1423 is an ATP binding site; the sequence is GFNGAGKT.

It belongs to the ABC transporter superfamily. ABCA family. Homooligomer; disulfide-linked. N-glycosylated. Localization at intracellular vesicles is accompanied by processing of oligosaccharide from high mannose type to complex type. N-linked glycosylation at Asn-124 and Asn-140 is required for stability and efficient anterograde trafficking and prevents from proteasomal degradation. Post-translationally, proteolytically cleaved by CTSL and to a lower extent by CTSB within multivesicular bodies (MVB) and lamellar bodies (LB) leading to a mature form of 150 kDa. Expressed in brain, pancreas, skeletal muscle and heart. Highly expressed in the lung in an AT2-cell-specific manner. Weakly expressed in placenta, kidney and liver. Also expressed in medullary thyroid carcinoma cells (MTC) and in C-cell carcinoma.

Its subcellular location is the endosome. It localises to the multivesicular body membrane. It is found in the cytoplasmic vesicle membrane. The protein localises to the late endosome membrane. The protein resides in the lysosome membrane. The catalysed reaction is ATP + H2O + xenobioticSide 1 = ADP + phosphate + xenobioticSide 2.. The enzyme catalyses a 1,2-diacyl-sn-glycero-3-phosphocholine(in) + ATP + H2O = a 1,2-diacyl-sn-glycero-3-phosphocholine(out) + ADP + phosphate + H(+). It carries out the reaction ATP + H2O + phospholipidSide 1 = ADP + phosphate + phospholipidSide 2.. It catalyses the reaction 1,2-dihexadecanoyl-sn-glycero-3-phosphocholine(in) + ATP + H2O = 1,2-dihexadecanoyl-sn-glycero-3-phosphocholine(out) + ADP + phosphate + H(+). The catalysed reaction is cholesterol(in) + ATP + H2O = cholesterol(out) + ADP + phosphate + H(+). The enzyme catalyses a 1,2-diacyl-sn-glycero-3-phospho-(1'-sn-glycerol)(in) + ATP + H2O = a 1,2-diacyl-sn-glycero-3-phospho-(1'-sn-glycerol)(out) + ADP + phosphate + H(+). With respect to regulation, the ATP-dependent phosphatidylcholine transport is competitively inhibited by miltefosine. In terms of biological role, catalyzes the ATP-dependent transport of phospholipids such as phosphatidylcholine and phosphoglycerol from the cytoplasm into the lumen side of lamellar bodies, in turn participates in the lamellar bodies biogenesis and homeostasis of pulmonary surfactant. Transports preferentially phosphatidylcholine containing short acyl chains. In addition plays a role as an efflux transporter of miltefosine across macrophage membranes and free cholesterol (FC) through intralumenal vesicles by removing FC from the cell as a component of surfactant and protects cells from free cholesterol toxicity. The chain is Phospholipid-transporting ATPase ABCA3 from Homo sapiens (Human).